A 475-amino-acid chain; its full sequence is Phosphoethanolamine N-methyltransferase 1 (475 aa).

It belongs to the class I-like SAM-binding methyltransferase superfamily.

The enzyme catalyses phosphoethanolamine + S-adenosyl-L-methionine = N-methylethanolamine phosphate + S-adenosyl-L-homocysteine + H(+). Its pathway is phospholipid metabolism; phosphatidylcholine biosynthesis; phosphocholine from phosphoethanolamine. Feedback inhibition by phosphatidylcholine. Functionally, catalyzes the first step in the synthesis of phosphocholine by converting phosphoethanolamine into phospho-monomethylethanolamine (N-methylethanolamine phosphate). Phosphocholine is a precursor for phosphatidylcholine, a major component in membranes and a precursor itself in the production of glycoconjugates secreted by parasitic nematodes to avoid host immune responses. The protein is Phosphoethanolamine N-methyltransferase 1 of Caenorhabditis elegans.